The following is a 258-amino-acid chain: 5'-nucleotidase SurE (258 aa).

Residues aspartate 13, aspartate 14, serine 44, and asparagine 92 each coordinate a divalent metal cation. The tract at residues 237–258 is disordered; sequence SPLTAPHSTEHHDALDGIATEF.

It belongs to the SurE nucleotidase family. Requires a divalent metal cation as cofactor.

The protein localises to the cytoplasm. The enzyme catalyses a ribonucleoside 5'-phosphate + H2O = a ribonucleoside + phosphate. Its function is as follows. Nucleotidase that shows phosphatase activity on nucleoside 5'-monophosphates. This is 5'-nucleotidase SurE from Halobacterium salinarum (strain ATCC 29341 / DSM 671 / R1).